The sequence spans 162 residues: Large ribosomal subunit protein uL30 (162 aa).

It belongs to the universal ribosomal protein uL30 family. Part of the 50S ribosomal subunit.

This Desulfurococcus amylolyticus (strain DSM 18924 / JCM 16383 / VKM B-2413 / 1221n) (Desulfurococcus kamchatkensis) protein is Large ribosomal subunit protein uL30.